We begin with the raw amino-acid sequence, 644 residues long: Macrolide export ATP-binding/permease protein MacB (644 aa).

The region spanning 4–242 (IECKNINRCF…SNVGRIREKA (239 aa)) is the ABC transporter domain. ATP is bound at residue 40–47 (GQSGSGKS). The next 4 helical transmembrane spans lie at 270–290 (LLTM…VALG), 524–544 (IALI…LVSV), 574–594 (LICI…SLVF), and 607–627 (AASV…FGFM).

The protein belongs to the ABC transporter superfamily. Macrolide exporter (TC 3.A.1.122) family. In terms of assembly, homodimer.

Its subcellular location is the cell inner membrane. Functionally, non-canonical ABC transporter that contains transmembrane domains (TMD), which form a pore in the inner membrane, and an ATP-binding domain (NBD), which is responsible for energy generation. Confers resistance against macrolides. This is Macrolide export ATP-binding/permease protein MacB from Neisseria gonorrhoeae (strain ATCC 700825 / FA 1090).